Reading from the N-terminus, the 394-residue chain is Elongation factor Tu (394 aa).

The tr-type G domain occupies 10–204 (KPHVNVGTIG…HLDTYIPEPE (195 aa)). Residues 19–26 (GHVDHGKT) form a G1 region. 19–26 (GHVDHGKT) is a binding site for GTP. Residue Thr-26 coordinates Mg(2+). The segment at 60–64 (GITIN) is G2. The tract at residues 81–84 (DCPG) is G3. Residues 81–85 (DCPGH) and 136–139 (NKCD) each bind GTP. The segment at 136–139 (NKCD) is G4. Residues 174-176 (SAL) form a G5 region.

The protein belongs to the TRAFAC class translation factor GTPase superfamily. Classic translation factor GTPase family. EF-Tu/EF-1A subfamily. Monomer.

Its subcellular location is the cytoplasm. It carries out the reaction GTP + H2O = GDP + phosphate + H(+). Its function is as follows. GTP hydrolase that promotes the GTP-dependent binding of aminoacyl-tRNA to the A-site of ribosomes during protein biosynthesis. In Aeromonas hydrophila subsp. hydrophila (strain ATCC 7966 / DSM 30187 / BCRC 13018 / CCUG 14551 / JCM 1027 / KCTC 2358 / NCIMB 9240 / NCTC 8049), this protein is Elongation factor Tu.